We begin with the raw amino-acid sequence, 469 residues long: Neuraminidase (469 aa).

Residues 1–6 (MNPNQK) lie on the Intravirion side of the membrane. Residues 7–29 (IITIGSVSLTIATICFLMQIAIQ) traverse the membrane as a helical segment. Residues 11 to 33 (GSVSLTIATICFLMQIAIQVTTV) are involved in apical transport and lipid raft association. Residues 30–469 (VTTVTLHFKQ…DGADINLMPI (440 aa)) are Virion surface-facing. Residues 36–88 (HFKQYECDSPANNQVMPCEPIIIERNITEIVYLTNTTIEKEICPKLVEYRNWS) are hypervariable stalk region. 3 N-linked (GlcNAc...) asparagine; by host glycosylation sites follow: asparagine 61, asparagine 70, and asparagine 86. Residues 91–469 (QCKITGFAPF…DGADINLMPI (379 aa)) are head of neuraminidase. 8 disulfides stabilise this stretch: cysteine 92–cysteine 417, cysteine 124–cysteine 129, cysteine 183–cysteine 230, cysteine 232–cysteine 237, cysteine 278–cysteine 291, cysteine 280–cysteine 289, cysteine 318–cysteine 337, and cysteine 421–cysteine 447. Arginine 118 is a binding site for substrate. N-linked (GlcNAc...) asparagine; by host glycosylation is present at asparagine 146. Residue aspartate 151 is the Proton donor/acceptor of the active site. Arginine 152 contributes to the substrate binding site. Asparagine 200 and asparagine 234 each carry an N-linked (GlcNAc...) asparagine; by host glycan. 276 to 277 (EE) contributes to the substrate binding site. Residue arginine 292 participates in substrate binding. Aspartate 293, glycine 297, and aspartate 324 together coordinate Ca(2+). Arginine 371 provides a ligand contact to substrate. N-linked (GlcNAc...) asparagine; by host glycosylation occurs at asparagine 402. Tyrosine 406 (nucleophile) is an active-site residue.

It belongs to the glycosyl hydrolase 34 family. Homotetramer. It depends on Ca(2+) as a cofactor. In terms of processing, N-glycosylated.

Its subcellular location is the virion membrane. The protein localises to the host apical cell membrane. It carries out the reaction Hydrolysis of alpha-(2-&gt;3)-, alpha-(2-&gt;6)-, alpha-(2-&gt;8)- glycosidic linkages of terminal sialic acid residues in oligosaccharides, glycoproteins, glycolipids, colominic acid and synthetic substrates.. Inhibited by the neuraminidase inhibitors zanamivir (Relenza) and oseltamivir (Tamiflu). These drugs interfere with the release of progeny virus from infected cells and are effective against all influenza strains. Resistance to neuraminidase inhibitors is quite rare. In terms of biological role, catalyzes the removal of terminal sialic acid residues from viral and cellular glycoconjugates. Cleaves off the terminal sialic acids on the glycosylated HA during virus budding to facilitate virus release. Additionally helps virus spread through the circulation by further removing sialic acids from the cell surface. These cleavages prevent self-aggregation and ensure the efficient spread of the progeny virus from cell to cell. Otherwise, infection would be limited to one round of replication. Described as a receptor-destroying enzyme because it cleaves a terminal sialic acid from the cellular receptors. May facilitate viral invasion of the upper airways by cleaving the sialic acid moieties on the mucin of the airway epithelial cells. Likely to plays a role in the budding process through its association with lipid rafts during intracellular transport. May additionally display a raft-association independent effect on budding. Plays a role in the determination of host range restriction on replication and virulence. Sialidase activity in late endosome/lysosome traffic seems to enhance virus replication. In Aves (whales), this protein is Neuraminidase.